Here is a 474-residue protein sequence, read N- to C-terminus: Nitric oxide reductase subunit B (474 aa).

Residues Y19–L39 traverse the membrane as a helical segment. H60 contacts heme b. Transmembrane regions (helical) follow at residues T61–P81, I95–V115, I145–G165, V169–F189, H207–I227, V243–I263, L270–F290, and S308–M328. Positions 207, 258, and 259 each coordinate Fe cation. Positions 347 and 349 each coordinate heme b. 3 helical membrane-spanning segments follow: residues G348 to M368, F390 to V410, and L433 to C453.

Belongs to the heme-copper respiratory oxidase family. As to quaternary structure, heterodimer of cytochromes b (large subunit) and c (small subunit).

It localises to the cell membrane. The catalysed reaction is nitrous oxide + 2 Fe(III)-[cytochrome c] + H2O = 2 nitric oxide + 2 Fe(II)-[cytochrome c] + 2 H(+). Its pathway is nitrogen metabolism; nitrate reduction (denitrification); dinitrogen from nitrate: step 3/4. In terms of biological role, component of the anaerobic respiratory chain that transforms nitrate to dinitrogen (denitrification). NorB is the catalytic subunit of the enzyme complex. Shows proton pump activity across the membrane in denitrifying bacterial cells. The mononitrogen reduction is probably coupled to electron transport phosphorylation. This is Nitric oxide reductase subunit B (norB) from Stutzerimonas stutzeri (Pseudomonas stutzeri).